The primary structure comprises 75 residues: ATP synthase subunit c (75 aa).

2 helical membrane passes run 12 to 32 (LASI…GIVV) and 49 to 69 (LTVL…IGIG).

Belongs to the ATPase C chain family. In terms of assembly, F-type ATPases have 2 components, F(1) - the catalytic core - and F(0) - the membrane proton channel. F(1) has five subunits: alpha(3), beta(3), gamma(1), delta(1), epsilon(1). F(0) has three main subunits: a(1), b(2) and c(10-14). The alpha and beta chains form an alternating ring which encloses part of the gamma chain. F(1) is attached to F(0) by a central stalk formed by the gamma and epsilon chains, while a peripheral stalk is formed by the delta and b chains.

The protein resides in the cell membrane. Functionally, f(1)F(0) ATP synthase produces ATP from ADP in the presence of a proton or sodium gradient. F-type ATPases consist of two structural domains, F(1) containing the extramembraneous catalytic core and F(0) containing the membrane proton channel, linked together by a central stalk and a peripheral stalk. During catalysis, ATP synthesis in the catalytic domain of F(1) is coupled via a rotary mechanism of the central stalk subunits to proton translocation. Key component of the F(0) channel; it plays a direct role in translocation across the membrane. A homomeric c-ring of between 10-14 subunits forms the central stalk rotor element with the F(1) delta and epsilon subunits. This is ATP synthase subunit c from Tropheryma whipplei (strain TW08/27) (Whipple's bacillus).